We begin with the raw amino-acid sequence, 554 residues long: Intraflagellar transport protein 56 (554 aa).

A disordered region spans residues 1–27 (MMLSRAKPAVGGESPHTDKRKKKGRKI). Residues 18-27 (DKRKKKGRKI) are compositionally biased toward basic residues. TPR repeat units follow at residues 57–90 (EDTN…ENCN), 92–125 (EVWV…LQNR), 151–184 (KEDQ…NREY), and 468–501 (ANDC…EGKR).

It belongs to the IFT56 family. As to quaternary structure, component of the IFT complex B. Interacts with IFT46; the interaction is direct.

The protein localises to the cell projection. Its subcellular location is the cilium. Component of the intraflagellar transport (IFT) complex B required for transport of proteins in the motile cilium. Required for transport of specific ciliary cargo proteins related to motility, while it is neither required for IFT complex B assembly or motion nor for cilium assembly. Required for efficient coupling between the accumulation of GLI2 and GLI3 at the ciliary tips and their dissociation from the negative regulator SUFU. Plays a key role in maintaining the integrity of the IFT complex B and the proper ciliary localization of the IFT complex B components. Not required for IFT complex A ciliary localization or function. Essential for maintaining proper microtubule organization within the ciliary axoneme. This chain is Intraflagellar transport protein 56, found in Rattus norvegicus (Rat).